The following is a 352-amino-acid chain: Cysteinyl leukotriene receptor 1 (352 aa).

The Extracellular portion of the chain corresponds to 1–43; sequence MYLQGTKQTFLENMNGTENLTTSLINNTCHDTIDEFRNQVYST. 3 N-linked (GlcNAc...) asparagine glycosylation sites follow: N15, N19, and N26. Residues 44–64 form a helical membrane-spanning segment; sequence MYSVISVVGFFGNSFVLYVLI. Over 65-72 the chain is Cytoplasmic; the sequence is KTYHEKSA. The chain crosses the membrane as a helical span at residues 73-93; that stretch reads FQVYMINLAIADLLCVCTLPL. Topologically, residues 94–121 are extracellular; it reads RVVYYVHKGKWLFGDFLCRLTTYALYVN. C111 and C188 form a disulfide bridge. A helical membrane pass occupies residues 122-142; the sequence is LYCSIFFMTAMSFFRCVAIVF. The Cytoplasmic portion of the chain corresponds to 143-156; that stretch reads PVQNINLVTQKKAR. The chain crosses the membrane as a helical span at residues 157–177; sequence FVCIGIWIFVILTSSPFLMYK. At 178–208 the chain is on the extracellular side; the sequence is SYQDEKNNTKCFEPPQNNQAKKYVLILHYVS. N-linked (GlcNAc...) asparagine glycosylation is present at N184. Residues 209-229 traverse the membrane as a helical segment; that stretch reads LFFGFIIPFVTIIVCYTMIIL. The Cytoplasmic portion of the chain corresponds to 230-245; it reads TLLKNTMKKNMPSRRK. A helical transmembrane segment spans residues 246-266; it reads AIGMIIVVTAAFLVSFMPYHI. Over 267–291 the chain is Extracellular; the sequence is QRTIHLHLLHSETRPCDSVLRMQKS. A helical transmembrane segment spans residues 292–312; sequence VVITLSLAASNCCFDPLLYFF. Residues 313–352 are Cytoplasmic-facing; sequence SGGNFRRRLSTFRKHSLSSMTYVPKKKASLPEKGEEICNE.

The protein belongs to the G-protein coupled receptor 1 family. In terms of tissue distribution, widely expressed, with higher expression in the lung and skin, intermediate levels in the heart, kidney and stomach and lower levels in several other tissues. Isoform 1 is the most abundant form in all tested tissues.

Its subcellular location is the cell membrane. Functionally, receptor for cysteinyl leukotrienes mediating constriction of the microvascular smooth muscle during an inflammatory response. This response is mediated via a G-protein that activates a phosphatidylinositol-calcium second messenger system. The rank order of affinities for the leukotrienes is LTD4 &gt;&gt; LTE4 = LTC4 &gt;&gt; LTB4. This Mus musculus (Mouse) protein is Cysteinyl leukotriene receptor 1 (Cysltr1).